The chain runs to 343 residues: MSILSPLIIRLCNPRGFCAGVDRAIQIVLLALKKYGAPVYVRHEIVHNRYVVEGLQQRGAIFVEELDEIPEEHRNQPVVFSAHGVPKSVPEQADCYNLFYLDATCPLVSKVHKQAMRHQRHRRHVILIGHAGHPEVIGTMGQLEKGGVTLIETVEDALHYQPDDPDNLGFVTQTTLSVEDTAEILDVLQRRFPALEPPAAESICYATTNRQNAVKAAALGSDLFLIVGAPNSSNSRRLVEVAERSGARQSILVQRADEIDFDHLGALSVVSLSAGASAPEIIVDEIISAFRKRYNVTIELAETVVENETFLVNRELRDVVLTPQDMAFMNGRSEMLKNKNQDM.

C18 is a [4Fe-4S] cluster binding site. Residues H47 and H83 each coordinate (2E)-4-hydroxy-3-methylbut-2-enyl diphosphate. Residues H47 and H83 each contribute to the dimethylallyl diphosphate site. H47 and H83 together coordinate isopentenyl diphosphate. Residue C105 participates in [4Fe-4S] cluster binding. Residue H133 participates in (2E)-4-hydroxy-3-methylbut-2-enyl diphosphate binding. Position 133 (H133) interacts with dimethylallyl diphosphate. H133 contacts isopentenyl diphosphate. Residue E135 is the Proton donor of the active site. (2E)-4-hydroxy-3-methylbut-2-enyl diphosphate is bound at residue T174. Residue C204 coordinates [4Fe-4S] cluster. Residues S232, S233, N234, and S277 each contribute to the (2E)-4-hydroxy-3-methylbut-2-enyl diphosphate site. Residues S232, S233, N234, and S277 each coordinate dimethylallyl diphosphate. Isopentenyl diphosphate contacts are provided by S232, S233, N234, and S277.

Belongs to the IspH family. The cofactor is [4Fe-4S] cluster.

The catalysed reaction is isopentenyl diphosphate + 2 oxidized [2Fe-2S]-[ferredoxin] + H2O = (2E)-4-hydroxy-3-methylbut-2-enyl diphosphate + 2 reduced [2Fe-2S]-[ferredoxin] + 2 H(+). The enzyme catalyses dimethylallyl diphosphate + 2 oxidized [2Fe-2S]-[ferredoxin] + H2O = (2E)-4-hydroxy-3-methylbut-2-enyl diphosphate + 2 reduced [2Fe-2S]-[ferredoxin] + 2 H(+). The protein operates within isoprenoid biosynthesis; dimethylallyl diphosphate biosynthesis; dimethylallyl diphosphate from (2E)-4-hydroxy-3-methylbutenyl diphosphate: step 1/1. It participates in isoprenoid biosynthesis; isopentenyl diphosphate biosynthesis via DXP pathway; isopentenyl diphosphate from 1-deoxy-D-xylulose 5-phosphate: step 6/6. Functionally, catalyzes the conversion of 1-hydroxy-2-methyl-2-(E)-butenyl 4-diphosphate (HMBPP) into a mixture of isopentenyl diphosphate (IPP) and dimethylallyl diphosphate (DMAPP). Acts in the terminal step of the DOXP/MEP pathway for isoprenoid precursor biosynthesis. The sequence is that of 4-hydroxy-3-methylbut-2-enyl diphosphate reductase from Bartonella henselae (strain ATCC 49882 / DSM 28221 / CCUG 30454 / Houston 1) (Rochalimaea henselae).